A 220-amino-acid polypeptide reads, in one-letter code: Thymidylate kinase (220 aa).

An ATP-binding site is contributed by 10–17 (GIDGCGKS).

It belongs to the thymidylate kinase family.

It catalyses the reaction dTMP + ATP = dTDP + ADP. Its function is as follows. Phosphorylation of dTMP to form dTDP in both de novo and salvage pathways of dTTP synthesis. The sequence is that of Thymidylate kinase from Prochlorococcus marinus (strain SARG / CCMP1375 / SS120).